A 299-amino-acid chain; its full sequence is Bifunctional protein FolD (299 aa).

NADP(+) contacts are provided by residues 166–168, serine 191, and isoleucine 232; that span reads GRS.

This sequence belongs to the tetrahydrofolate dehydrogenase/cyclohydrolase family. In terms of assembly, homodimer.

The catalysed reaction is (6R)-5,10-methylene-5,6,7,8-tetrahydrofolate + NADP(+) = (6R)-5,10-methenyltetrahydrofolate + NADPH. It catalyses the reaction (6R)-5,10-methenyltetrahydrofolate + H2O = (6R)-10-formyltetrahydrofolate + H(+). The protein operates within one-carbon metabolism; tetrahydrofolate interconversion. Catalyzes the oxidation of 5,10-methylenetetrahydrofolate to 5,10-methenyltetrahydrofolate and then the hydrolysis of 5,10-methenyltetrahydrofolate to 10-formyltetrahydrofolate. The sequence is that of Bifunctional protein FolD from Dinoroseobacter shibae (strain DSM 16493 / NCIMB 14021 / DFL 12).